The following is a 576-amino-acid chain: K(+)/H(+) antiporter NhaP2 (576 aa).

The next 13 membrane-spanning stretches (helical) occupy residues 6 to 26 (INSFFLIGALLTAVSVLLSPM), 34 to 54 (ILLIFLAVGILAGEDGPGGIL), 58 to 78 (YSTAYLVSNLALAIILLDGGM), 87 to 107 (VALWPALSLATFGVAITTSIT), 109 to 129 (MMAAWLFDLHWLQGLLVGAIV), 163 to 183 (PMAVFLTVTLIAILANVDTEM), 185 to 205 (FSFMFISFIKQFGLGICLGLG), 219 to 239 (LADGLYSILVLSGGLIIYAAS), 242 to 262 (LGGSGILSIYLVGLFLGNKPT), 271 to 291 (VLDGMTWVSQIGMFLVLGLLL), 299 to 319 (ILIPGFALAFGMILFARPVAV), 335 to 355 (WFISWVGLRGAVPIILAVFPM), and 359 to 379 (LPGAQLYFNLAFFVVLVSLLV). The 82-residue stretch at 405–486 (SGVEIYPSSE…LEALSNLFSQ (82 aa)) folds into the RCK C-terminal domain.

Belongs to the monovalent cation:proton antiporter 1 (CPA1) transporter (TC 2.A.36) family. NhaP2 subfamily.

The protein resides in the cell inner membrane. It carries out the reaction K(+)(in) + H(+)(out) = K(+)(out) + H(+)(in). In terms of biological role, k(+)/H(+) antiporter that extrudes potassium in exchange for external protons and maintains the internal concentration of potassium under toxic levels. This Shewanella baltica (strain OS155 / ATCC BAA-1091) protein is K(+)/H(+) antiporter NhaP2.